Consider the following 289-residue polypeptide: Survival motor neuron protein (289 aa).

Over residues Met-1–Gly-10 the composition is skewed to gly residues. Residues Met-1–Asp-27 form a disordered region. Positions Ser-11–Asp-42 are P1 (binding site for GEMIN2). A Phosphothreonine modification is found at Thr-23. Ser-26 and Ser-29 each carry phosphoserine. Lys-49 is covalently cross-linked (Glycyl lysine isopeptide (Lys-Gly) (interchain with G-Cter in SUMO2)). The tract at residues Gly-55–Lys-88 is disordered. Residues Gly-66–Lys-80 show a composition bias toward basic residues. At Thr-67 the chain carries Phosphothreonine. In terms of domain architecture, Tudor spans Gln-89–Asn-149. The segment at Lys-95–Lys-205 is required for interaction with RPP20/POP7. Residues Thr-150 to Cys-226 are disordered. Residues Arg-171–Ser-181 show a composition bias toward basic residues. Lys-205 is covalently cross-linked (Glycyl lysine isopeptide (Lys-Gly) (interchain with G-Cter in SUMO2)). Pro residues predominate over residues Gly-212 to Cys-226. Residues Pro-235–Trp-262 form a P2 (binding site for SM B) region. The required for interaction with SYNCRIP stretch occupies residues Gly-274–Asn-289.

This sequence belongs to the SMN family. As to quaternary structure, homooligomer; may form higher order homooligomers in the dimer to octamer range. Part of the core SMN complex that contains SMN1, GEMIN2/SIP1, DDX20/GEMIN3, GEMIN4, GEMIN5, GEMIN6, GEMIN7, GEMIN8 and STRAP/UNRIP. Part of the SMN-Sm complex that contains SMN1, GEMIN2/SIP1, DDX20/GEMIN3, GEMIN4, GEMIN5, GEMIN6, GEMIN7, GEMIN8, STRAP/UNRIP and the Sm proteins SNRPB, SNRPD1, SNRPD2, SNRPD3, SNRPE, SNRPF and SNRPG. Component of an import snRNP complex composed of KPNB1, RNUT1, SMN1 and ZNF259. Interacts with DDX20, FBL, NOLA1, RNUT1 and with several spliceosomal snRNP core Sm proteins, including SNRPB, SNRPD1, SNRPD2, SNRPD3, SNRPE and ILF3. Interacts with GEMIN2; the interaction is direct. Interacts with GEMIN3; the interaction is direct. Interacts with GEMIN8; the interaction is direct. Interacts with SNRPB; the interaction is direct. Interacts (via Tudor domain) with SNRPD1 (via C-terminus); the interaction is direct. Interacts with SNRPD2; the interaction is direct. Interacts (via Tudor domain) with SNRPD3 (via C-terminus); the interaction is direct. Interacts with SNRPE; the interaction is direct. Interacts with OSTF1, LSM10, LSM11 and RPP20/POP7. Interacts (via C-terminal region) with ZPR1 (via C-terminal region). Interacts (via Tudor domain) with COIL. Interacts with SETX; recruits SETX to POLR2A. Interacts with POLR2A (via the C-terminal domain (CTD)). Interacts with PRMT5. Interacts with XRN2. Interacts (via C-terminus) with FMR1 (via C-terminus); the interaction is direct and occurs in a RNA-independent manner. Interacts with SYNCRIP. Interacts (via Tudor domain) with SF3B2 (methylated form). Interacts with WRAP53/TCAB1. Interacts (via Tudor domain) with ELAVL4 in an RNA-independent manner; the interaction is required for localization of ELAVL4 to RNA granules. Interacts with FRG1.

The protein localises to the nucleus. Its subcellular location is the gem. The protein resides in the cajal body. It localises to the cytoplasm. It is found in the cytoplasmic granule. The protein localises to the perikaryon. Its subcellular location is the cell projection. The protein resides in the neuron projection. It localises to the axon. It is found in the myofibril. The protein localises to the sarcomere. Its subcellular location is the z line. Its function is as follows. The SMN complex catalyzes the assembly of small nuclear ribonucleoproteins (snRNPs), the building blocks of the spliceosome, and thereby plays an important role in the splicing of cellular pre-mRNAs. Most spliceosomal snRNPs contain a common set of Sm proteins SNRPB, SNRPD1, SNRPD2, SNRPD3, SNRPE, SNRPF and SNRPG that assemble in a heptameric protein ring on the Sm site of the small nuclear RNA to form the core snRNP (Sm core). In the cytosol, the Sm proteins SNRPD1, SNRPD2, SNRPE, SNRPF and SNRPG are trapped in an inactive 6S pICln-Sm complex by the chaperone CLNS1A that controls the assembly of the core snRNP. To assemble core snRNPs, the SMN complex accepts the trapped 5Sm proteins from CLNS1A forming an intermediate. Binding of snRNA inside 5Sm ultimately triggers eviction of the SMN complex, thereby allowing binding of SNRPD3 and SNRPB to complete assembly of the core snRNP. Within the SMN complex, SMN1 acts as a structural backbone and together with GEMIN2 it gathers the Sm complex subunits. Ensures the correct splicing of U12 intron-containing genes that may be important for normal motor and proprioceptive neurons development. Also required for resolving RNA-DNA hybrids created by RNA polymerase II, that form R-loop in transcription terminal regions, an important step in proper transcription termination. May also play a role in the metabolism of small nucleolar ribonucleoprotein (snoRNPs). This is Survival motor neuron protein (Smn1) from Rattus norvegicus (Rat).